Here is a 430-residue protein sequence, read N- to C-terminus: Trigger factor (430 aa).

The PPIase FKBP-type domain occupies 163–248 (GDTAVFDFAG…LHEVKTKQVP (86 aa)).

It belongs to the FKBP-type PPIase family. Tig subfamily.

The protein localises to the cytoplasm. It catalyses the reaction [protein]-peptidylproline (omega=180) = [protein]-peptidylproline (omega=0). In terms of biological role, involved in protein export. Acts as a chaperone by maintaining the newly synthesized protein in an open conformation. Functions as a peptidyl-prolyl cis-trans isomerase. This is Trigger factor from Exiguobacterium sp. (strain ATCC BAA-1283 / AT1b).